We begin with the raw amino-acid sequence, 424 residues long: CinA-like protein (424 aa).

This sequence belongs to the CinA family.

The polypeptide is CinA-like protein (Prochlorococcus marinus (strain MIT 9215)).